Consider the following 436-residue polypeptide: UDP-N-acetylmuramate--L-alanine ligase (436 aa).

ATP is bound at residue 108–114 (GAHGKTS).

Belongs to the MurCDEF family.

It is found in the cytoplasm. The enzyme catalyses UDP-N-acetyl-alpha-D-muramate + L-alanine + ATP = UDP-N-acetyl-alpha-D-muramoyl-L-alanine + ADP + phosphate + H(+). The protein operates within cell wall biogenesis; peptidoglycan biosynthesis. In terms of biological role, cell wall formation. This is UDP-N-acetylmuramate--L-alanine ligase from Bacillus cereus (strain Q1).